The following is a 645-amino-acid chain: MSDKTYPVSAYWNERAYINAAKYKDMYKRSIEEPDLFWGEEGKRIDWIKPYTKVKNTSFDPANVDIRWFEDGITNVAYNCIDRHLATRGDQTAILFEGDDPADSRAITYKELHDSVCRLANVLKAHGVGKGDTVSLYLPMIPEAAFAMLACARIGAIHSVIFGGFSPDSLAGRIEGCRSKVLITADEGLRGGRKVPLKANADLAIAKTGDIVQTMIVVTRTGGAVDWVEGRDVRYEEAIAAASPECPLTEVEAEHPLFILYTSGSTGAPKGVVHCTGGYLVYASMTHQYVFDYHDGDVYWCTADVGWVTGHSYIVYGPLANGATTLMFEGVPNYPSVSRFWEVIDKHKVTIFYTAPTAIRALMGSGEAPVKKTSRASLRLLGSVGEPINPEAWEWYHRVVGEERCPIVDTWWQTETGGILITPLPGATPEKPGSATLPFFGVKPQVVDATGAVLEGVCEGNLVIADSWPGQMRTIFGDHDRFVQSYFSTYPGKYFTGDGCRRDADGYYWITGRVDDVINVSGHRLGTAEVESSLVAHELVSEAAVVGYPHDIKGQGIYAYVTLMNGIEPSDRLRTELVTWVRKDIGPIATPDVVHFATGLPKTRSGKIMRRILRKIAEKEFSALGDVSTLADPTIVDDLIRNRLG.

Residues 190 to 193, Thr309, and Asn333 each bind CoA; that span reads RGGR. ATP is bound by residues 385-387, 409-414, Asp498, and Arg513; these read GEP and DTWWQT. Ser521 is a CoA binding site. An ATP-binding site is contributed by Arg524. The Mg(2+) site is built by Val535, His537, and Val540. Arg582 is a CoA binding site. Residue Lys607 is modified to N6-acetyllysine.

The protein belongs to the ATP-dependent AMP-binding enzyme family. Mg(2+) serves as cofactor. Acetylated. Deacetylation by the SIR2-homolog deacetylase activates the enzyme.

It catalyses the reaction acetate + ATP + CoA = acetyl-CoA + AMP + diphosphate. In terms of biological role, catalyzes the conversion of acetate into acetyl-CoA (AcCoA), an essential intermediate at the junction of anabolic and catabolic pathways. AcsA undergoes a two-step reaction. In the first half reaction, AcsA combines acetate with ATP to form acetyl-adenylate (AcAMP) intermediate. In the second half reaction, it can then transfer the acetyl group from AcAMP to the sulfhydryl group of CoA, forming the product AcCoA. The protein is Acetyl-coenzyme A synthetase of Beijerinckia indica subsp. indica (strain ATCC 9039 / DSM 1715 / NCIMB 8712).